A 287-amino-acid polypeptide reads, in one-letter code: Aspartate dehydrogenase domain-containing protein (287 aa).

Phosphoserine is present on residues S24 and S172.

It belongs to the L-aspartate dehydrogenase family.

This chain is Aspartate dehydrogenase domain-containing protein, found in Mus musculus (Mouse).